The sequence spans 262 residues: Lectin (262 aa).

The first 21 residues, 1 to 21 (MASSVLLVLSLFLVLLLTQAS), serve as a signal peptide directing secretion. 5 N-linked (GlcNAc...) asparagine glycosylation sites follow: Asn53, Asn82, Asn100, Asn129, and Asn205.

Belongs to the leguminous lectin family.

Functionally, this metalloglycoprotein, containing Ca(2+), Mn(2+), binds glycoconjugates containing terminal non-reducing alpha-D-GalNAc residues. The polypeptide is Lectin (Phaseolus lunatus (Lima bean)).